A 1107-amino-acid polypeptide reads, in one-letter code: OTU domain-containing protein 4 (1107 aa).

An N-acetylmethionine modification is found at Met1. One can recognise an OTU domain in the interval 34–155; the sequence is LYRKLVAKDG…GNHYDIVYPI (122 aa). The segment at 39 to 45 is cys-loop; sequence VAKDGSC. Asp42 is a catalytic residue. Catalysis depends on Cys45, which acts as the Nucleophile. Residues 94–104 form a variable-loop region; the sequence is LENPQEWVGQV. Tyr120 is modified (phosphotyrosine). Phosphoserine is present on residues Ser126 and Ser128. Position 131 is a phosphothreonine (Thr131). The segment at 143–148 is his-loop; the sequence is FSNGNH. His148 is an active-site residue. 4 positions are modified to phosphoserine: Ser166, Ser199, Ser202, and Ser204. Over residues 195-206 the composition is skewed to acidic residues; that stretch reads EESNSEISDSED. Disordered regions lie at residues 195–239 and 322–431; these read EESN…SADL and KHTP…DFDH. The span at 226 to 236 shows a compositional bias: polar residues; the sequence is GSENPKNNGNS. Position 340 is a phosphoserine (Ser340). The span at 392–403 shows a compositional bias: low complexity; the sequence is SSHSTGSQSQKS. A compositionally biased stretch (basic and acidic residues) spans 419–431; it reads RKPDRERAEDFDH. Position 438 is a phosphotyrosine (Tyr438). Ser442 is modified (phosphoserine). Residue Tyr459 is modified to Phosphotyrosine. The tract at residues 470-568 is disordered; that stretch reads PALSSSSVSQ…KPAEHIPLSN (99 aa). A compositionally biased stretch (low complexity) spans 473 to 486; the sequence is SSSSVSQSPSQNSN. Basic and acidic residues predominate over residues 495 to 528; sequence HARDRKGSMRRADAEERKDKDSLRGHTHVDKKPE. Ser544 and Ser895 each carry phosphoserine. Positions 918-1107 are disordered; it reads LSAASVSSKH…MGDGHRGQHT (190 aa). Residues 963–994 show a composition bias toward basic and acidic residues; that stretch reads NREREPGSAEPEPKRTIQSLKEKPEKVKDPKT. A phosphoserine mark is found at Ser1000, Ser1005, Ser1016, and Ser1017. Polar residues predominate over residues 1032-1041; the sequence is SKQFYNQTYG. Ser1042 bears the Phosphoserine mark. 2 stretches are compositionally biased toward basic and acidic residues: residues 1060 to 1079 and 1089 to 1107; these read VRGE…EGYQ and YRGD…GQHT.

In terms of assembly, interacts with MYD88; the interaction is direct. Interacts with ALKBH3; the interaction is direct. Interacts with USP7; the interaction is direct. Interacts with USP9X; the interaction is direct. Post-translationally, phosphorylation at Ser-202 and Ser-204 activates 'Lys-63'-specific deubiquitinase activity. Induced upon stimulation with IL1B.

It localises to the cytoplasm. The protein localises to the nucleus. The catalysed reaction is Thiol-dependent hydrolysis of ester, thioester, amide, peptide and isopeptide bonds formed by the C-terminal Gly of ubiquitin (a 76-residue protein attached to proteins as an intracellular targeting signal).. With respect to regulation, phosphorylation on Ser-202 and Ser-204 induces 'Lys-63'-specific deubiquitinase activity. Deubiquitinase which hydrolyzes the isopeptide bond between the ubiquitin C-terminus and the lysine epsilon-amino group of the target protein. May negatively regulate inflammatory and pathogen recognition signaling in innate immune response. Upon phosphorylation at Ser-202 and Ser-204 residues, via IL-1 receptor and Toll-like receptor signaling pathway, specifically deubiquitinates 'Lys-63'-polyubiquitinated MYD88 adapter protein triggering down-regulation of NF-kappa-B-dependent transcription of inflammatory mediators. Independently of the catalytic activity, acts as a scaffold for alternative deubiquitinases to assemble specific deubiquitinase-substrate complexes. Associates with USP7 and USP9X deubiquitinases to stabilize alkylation repair enzyme ALKBH3, thereby promoting the repair of alkylated DNA lesions. The polypeptide is OTU domain-containing protein 4 (Mus musculus (Mouse)).